The following is a 316-amino-acid chain: 4-hydroxy-3-methylbut-2-enyl diphosphate reductase (316 aa).

Cys-12 serves as a coordination point for [4Fe-4S] cluster. His-43 and His-81 together coordinate (2E)-4-hydroxy-3-methylbut-2-enyl diphosphate. Positions 43 and 81 each coordinate dimethylallyl diphosphate. His-43 and His-81 together coordinate isopentenyl diphosphate. Cys-103 contacts [4Fe-4S] cluster. Position 131 (His-131) interacts with (2E)-4-hydroxy-3-methylbut-2-enyl diphosphate. His-131 contributes to the dimethylallyl diphosphate binding site. His-131 contributes to the isopentenyl diphosphate binding site. The Proton donor role is filled by Glu-133. Residue Thr-170 coordinates (2E)-4-hydroxy-3-methylbut-2-enyl diphosphate. Cys-198 contacts [4Fe-4S] cluster. Ser-226, Asn-228, and Ser-271 together coordinate (2E)-4-hydroxy-3-methylbut-2-enyl diphosphate. Dimethylallyl diphosphate contacts are provided by Ser-226, Asn-228, and Ser-271. Isopentenyl diphosphate-binding residues include Ser-226, Asn-228, and Ser-271.

It belongs to the IspH family. [4Fe-4S] cluster is required as a cofactor.

It carries out the reaction isopentenyl diphosphate + 2 oxidized [2Fe-2S]-[ferredoxin] + H2O = (2E)-4-hydroxy-3-methylbut-2-enyl diphosphate + 2 reduced [2Fe-2S]-[ferredoxin] + 2 H(+). The enzyme catalyses dimethylallyl diphosphate + 2 oxidized [2Fe-2S]-[ferredoxin] + H2O = (2E)-4-hydroxy-3-methylbut-2-enyl diphosphate + 2 reduced [2Fe-2S]-[ferredoxin] + 2 H(+). The protein operates within isoprenoid biosynthesis; dimethylallyl diphosphate biosynthesis; dimethylallyl diphosphate from (2E)-4-hydroxy-3-methylbutenyl diphosphate: step 1/1. It functions in the pathway isoprenoid biosynthesis; isopentenyl diphosphate biosynthesis via DXP pathway; isopentenyl diphosphate from 1-deoxy-D-xylulose 5-phosphate: step 6/6. Its function is as follows. Catalyzes the conversion of 1-hydroxy-2-methyl-2-(E)-butenyl 4-diphosphate (HMBPP) into a mixture of isopentenyl diphosphate (IPP) and dimethylallyl diphosphate (DMAPP). Acts in the terminal step of the DOXP/MEP pathway for isoprenoid precursor biosynthesis. The sequence is that of 4-hydroxy-3-methylbut-2-enyl diphosphate reductase from Bacillus thuringiensis (strain Al Hakam).